Consider the following 274-residue polypeptide: 3-methyl-2-oxobutanoate hydroxymethyltransferase (274 aa).

Mg(2+) contacts are provided by Asp-44 and Asp-83. Residues 44-45 (DS), Asp-83, and Lys-113 each bind 3-methyl-2-oxobutanoate. Glu-115 is a binding site for Mg(2+). Glu-182 acts as the Proton acceptor in catalysis.

It belongs to the PanB family. In terms of assembly, homodecamer; pentamer of dimers. Mg(2+) serves as cofactor.

It is found in the cytoplasm. The catalysed reaction is 3-methyl-2-oxobutanoate + (6R)-5,10-methylene-5,6,7,8-tetrahydrofolate + H2O = 2-dehydropantoate + (6S)-5,6,7,8-tetrahydrofolate. It participates in cofactor biosynthesis; (R)-pantothenate biosynthesis; (R)-pantoate from 3-methyl-2-oxobutanoate: step 1/2. Catalyzes the reversible reaction in which hydroxymethyl group from 5,10-methylenetetrahydrofolate is transferred onto alpha-ketoisovalerate to form ketopantoate. The protein is 3-methyl-2-oxobutanoate hydroxymethyltransferase of Campylobacter jejuni (strain RM1221).